We begin with the raw amino-acid sequence, 310 residues long: Probable manganese-dependent inorganic pyrophosphatase (310 aa).

Residues His9, Asp13, Asp15, Asp76, His98, and Asp150 each contribute to the Mn(2+) site.

The protein belongs to the PPase class C family. As to quaternary structure, homodimer. It depends on Mn(2+) as a cofactor.

The protein localises to the cytoplasm. The enzyme catalyses diphosphate + H2O = 2 phosphate + H(+). The protein is Probable manganese-dependent inorganic pyrophosphatase (ppaC) of Streptococcus mutans serotype c (strain ATCC 700610 / UA159).